The chain runs to 238 residues: uncharacterized protein (238 aa).

This is an uncharacterized protein from Mycobacterium tuberculosis (strain ATCC 25618 / H37Rv).